A 299-amino-acid polypeptide reads, in one-letter code: GTPase Era (299 aa).

The Era-type G domain occupies 4–171 (KSGFVAILGR…VDILSENLEE (168 aa)). A G1 region spans residues 12–19 (GRPNVGKS). A GTP-binding site is contributed by 12–19 (GRPNVGKS). A G2 region spans residues 38–42 (QTTRN). Residues 59 to 62 (DTPG) are G3. GTP contacts are provided by residues 59-63 (DTPGI) and 121-124 (NKID). Residues 121–124 (NKID) form a G4 region. Residues 150-152 (ISA) form a G5 region. The KH type-2 domain occupies 202 to 280 (TREEIPHSVA…FLETWVKVKK (79 aa)).

The protein belongs to the TRAFAC class TrmE-Era-EngA-EngB-Septin-like GTPase superfamily. Era GTPase family. As to quaternary structure, monomer.

The protein localises to the cytoplasm. Its subcellular location is the cell membrane. Its function is as follows. An essential GTPase that binds both GDP and GTP, with rapid nucleotide exchange. Plays a role in 16S rRNA processing and 30S ribosomal subunit biogenesis and possibly also in cell cycle regulation and energy metabolism. The protein is GTPase Era of Streptococcus gordonii (strain Challis / ATCC 35105 / BCRC 15272 / CH1 / DL1 / V288).